We begin with the raw amino-acid sequence, 212 residues long: Large ribosomal subunit protein uL3 (212 aa).

The interval 147–166 is disordered; that stretch reads GSTGQNQSPGKVFKGKKMPG. Position 153 is an N5-methylglutamine (glutamine 153).

The protein belongs to the universal ribosomal protein uL3 family. Part of the 50S ribosomal subunit. Forms a cluster with proteins L14 and L19. Post-translationally, methylated by PrmB.

One of the primary rRNA binding proteins, it binds directly near the 3'-end of the 23S rRNA, where it nucleates assembly of the 50S subunit. The chain is Large ribosomal subunit protein uL3 from Psychrobacter sp. (strain PRwf-1).